Reading from the N-terminus, the 276-residue chain is Protein PXR1 (276 aa).

The tract at residues 1 to 23 (MGLAGTKIKQRFGNDPRNTNWSN) is disordered. One can recognise a G-patch domain in the interval 25–71 (TSRFGHQYLAKMGWQQGSGLGLVSHALTTHVKVSIKDDNLGLGAKLH). A compositionally biased stretch (basic and acidic residues) spans 152–172 (DDGKKSRKRKADESETKEDKK). Residues 152–261 (DDGKKSRKRK…SKWIKQKRAS (110 aa)) form a disordered region. Positions 173 to 218 (TLKKHKKEKKDKKEKKEKKKKKEKKDKKDKKDKKNKKDKKDKKDKK) are enriched in basic residues. Residues 219–228 (DKKDKIRTGS) are compositionally biased toward basic and acidic residues. Residues 229-239 (DETLVSKESSA) show a composition bias toward polar residues.

Belongs to the PINX1 family.

It localises to the nucleus. The protein resides in the nucleolus. Its function is as follows. Involved in rRNA-processing at A0, A1 and A2 sites and negatively regulates telomerase. This Candida albicans (strain SC5314 / ATCC MYA-2876) (Yeast) protein is Protein PXR1 (PXR1).